We begin with the raw amino-acid sequence, 258 residues long: Isoprenyl transferase (258 aa).

Residue Asp38 is part of the active site. Asp38 contributes to the Mg(2+) binding site. Substrate-binding positions include 39-42, Trp43, Arg51, His55, and 83-85; these read GNGR and STE. Asn86 serves as the catalytic Proton acceptor. Residues Trp87, Arg89, Arg206, and 212–214 each bind substrate; that span reads RIS. Glu225 is a Mg(2+) binding site.

Belongs to the UPP synthase family. In terms of assembly, homodimer. It depends on Mg(2+) as a cofactor.

Functionally, catalyzes the condensation of isopentenyl diphosphate (IPP) with allylic pyrophosphates generating different type of terpenoids. This Bacillus cereus (strain ATCC 10987 / NRS 248) protein is Isoprenyl transferase.